The primary structure comprises 377 residues: Progesterone receptor (377 aa).

The segment at 1–15 (EASQSPQYSFESLPQ) is modulating, Pro-Rich. Positions 16 to 90 (KICLICGDEA…AGMVLGGRKF (75 aa)) form a DNA-binding region, nuclear receptor. 2 NR C4-type zinc fingers span residues 18–38 (CLIC…CGSC) and 54–78 (CAGR…LRKC). Ser-127 carries the phosphoserine modification. In terms of domain architecture, NR LBD spans 130 to 364 (QDLQLIPPLI…EFPEMMSEVI (235 aa)). Positions 138 to 377 (LINLLMSIEP…LPKILAGMVK (240 aa)) are AF2; mediates transcriptional activation.

Belongs to the nuclear hormone receptor family. NR3 subfamily. In terms of assembly, interacts with CUEDC2, SMARD1 and with UNC45A. Interacts with PRMT2. Interacts with NCOA2 and NCOA1. Interacts with KLF9. Interacts with GTF2B. Palmitoylated by ZDHHC7 and ZDHHC21. Palmitoylation is required for plasma membrane targeting and for rapid intracellular signaling via ERK and AKT kinases and cAMP generation.

It is found in the nucleus. Functionally, the steroid hormones and their receptors are involved in the regulation of eukaryotic gene expression and affect cellular proliferation and differentiation in target tissues. Transcriptional activator of several progesteron-dependent promoters in a variety of cell types. Involved in activation of SRC-dependent MAPK signaling on hormone stimulation. The protein is Progesterone receptor (PGR) of Ovis aries (Sheep).